The following is a 283-amino-acid chain: Secretory carrier-associated membrane protein 2 (283 aa).

Positions 1–47 (MARHDPNPFADEEINPFANHTSVPPASNSYLKPLPPEPYDRGATVDI) are disordered. The Cytoplasmic portion of the chain corresponds to 1–123 (MARHDPNPFA…LQKIQYVAFT (123 aa)). Positions 18–30 (ANHTSVPPASNSY) are enriched in polar residues. Positions 50-87 (DSGNDLRAKEMELQAKENELKRKEQELKRREDAIARTG) form a coiled coil. 4 helical membrane-spanning segments follow: residues 124–144 (TLLG…VAWI), 151–171 (IWLL…VLWY), 186–206 (FGAF…AAVA), and 234–254 (IMYF…IWVI). Topologically, residues 255 to 283 (QQVYAYFRGSGKAAEMKREATKSTLMRAL) are cytoplasmic.

It belongs to the SCAMP family.

It is found in the cell membrane. The protein resides in the cytoplasmic vesicle. The protein localises to the secretory vesicle membrane. In terms of biological role, probably involved in membrane trafficking. This is Secretory carrier-associated membrane protein 2 (SCAMP2) from Arabidopsis thaliana (Mouse-ear cress).